The following is a 468-amino-acid chain: Elongation factor 1-alpha (468 aa).

In terms of domain architecture, tr-type G spans 6–244 (KPHINIVVIG…DNIPLPARPS (239 aa)). Positions 15 to 22 (GHVDSGKS) are G1. 15-22 (GHVDSGKS) provides a ligand contact to GTP. The segment at 71–75 (GITID) is G2. Positions 92 to 95 (DAPG) are G3. GTP-binding positions include 92–96 (DAPGH) and 154–157 (NKID). The segment at 154–157 (NKID) is G4. The tract at residues 195–197 (SGW) is G5. 5-glutamyl glycerylphosphorylethanolamine is present on residues E303 and E376.

This sequence belongs to the TRAFAC class translation factor GTPase superfamily. Classic translation factor GTPase family. EF-Tu/EF-1A subfamily.

It localises to the cytoplasm. Functionally, this protein promotes the GTP-dependent binding of aminoacyl-tRNA to the A-site of ribosomes during protein biosynthesis. This chain is Elongation factor 1-alpha, found in Hydra vulgaris (Hydra).